Consider the following 369-residue polypeptide: Omega-amidase, chloroplastic (369 aa).

The N-terminal 63 residues, 1–63 (MKSAISSSLF…SALRSISSSM (63 aa)), are a transit peptide targeting the chloroplast. The residue at position 64 (A64) is an N-acetylalanine. One can recognise a CN hydrolase domain in the interval 88 to 337 (FNIGLCQLSV…EAIIIAEIDY (250 aa)). Residue E127 is the Proton acceptor of the active site. The active-site Proton donor is K201. C242 acts as the Nucleophile in catalysis.

Belongs to the nitrilase superfamily. NIT1/NIT2 family.

It is found in the plastid. The protein resides in the chloroplast. It catalyses the reaction a monoamide of a dicarboxylate + H2O = a dicarboxylate + NH4(+). Functionally, omega-amidase involved in the metabolism of asparagine. Probably also closely coupled with glutamine transamination in the methionine salvage cycle. Can use alpha-ketosuccinamate and alpha-hydroxysuccinamate as substrates, producing respectively oxaloacetate and malate, or alpha-ketoglutaramate, producing alpha-ketoglutarate. In Arabidopsis thaliana (Mouse-ear cress), this protein is Omega-amidase, chloroplastic.